The sequence spans 89 residues: MALDTSTKAQIVSDFQRAQGDTGSPEVQVALLTARINGLTGHFKANAKDHHSRRGLLKMVSQRRKLLDYLKGRNVDSYRALIERLGLRK.

It belongs to the universal ribosomal protein uS15 family. As to quaternary structure, part of the 30S ribosomal subunit. Forms a bridge to the 50S subunit in the 70S ribosome, contacting the 23S rRNA.

In terms of biological role, one of the primary rRNA binding proteins, it binds directly to 16S rRNA where it helps nucleate assembly of the platform of the 30S subunit by binding and bridging several RNA helices of the 16S rRNA. Forms an intersubunit bridge (bridge B4) with the 23S rRNA of the 50S subunit in the ribosome. The sequence is that of Small ribosomal subunit protein uS15 from Azoarcus sp. (strain BH72).